The primary structure comprises 122 residues: MARISGIDLPKNKRIEIALTYIYGVGLSSSQKILEKANIDANKRCKDLDDNEVSLIRSIIDENYPVEGAAKRVESMNIKRLMEINCIRGKRHRVGLPLRGQRTRTNARTRRGAKKTVAGKKK.

The tract at residues 102–122 (RTRTNARTRRGAKKTVAGKKK) is disordered.

It belongs to the universal ribosomal protein uS13 family. As to quaternary structure, part of the 30S ribosomal subunit.

It is found in the plastid. The protein localises to the chloroplast. Located at the top of the head of the 30S subunit, it contacts several helices of the 16S rRNA. This chain is Small ribosomal subunit protein uS13c, found in Guillardia theta (Cryptophyte).